Reading from the N-terminus, the 205-residue chain is Histone H1, early embryonic (205 aa).

2 disordered regions span residues 1-21 (MAEK…HPPA) and 94-205 (AKAQ…AKSK). An H15 domain is found at 17–91 (AHPPAAEMVA…GASGSFKVNV (75 aa)). Positions 98 to 124 (ASEKAKKEKEKAKLLAQREKAKEKGCS) are enriched in basic and acidic residues. Basic residues-rich tracts occupy residues 135–150 (PKKV…KPVK) and 157–205 (EKKK…AKSK).

The protein belongs to the histone H1/H5 family.

The protein resides in the nucleus. Its subcellular location is the chromosome. In terms of biological role, histones H1 are necessary for the condensation of nucleosome chains into higher-order structures. The polypeptide is Histone H1, early embryonic (Strongylocentrotus purpuratus (Purple sea urchin)).